The chain runs to 94 residues: Lipolysis-activating peptide 1-beta chain (94 aa).

A signal peptide spans methionine 1–glycine 19. The region spanning glutamate 20 to proline 87 is the LCN-type CS-alpha/beta domain. 3 disulfides stabilise this stretch: cysteine 34–cysteine 56, cysteine 42–cysteine 66, and cysteine 46–cysteine 68.

It belongs to the long (3 C-C) scorpion toxin superfamily. As to quaternary structure, homodimer; disulfide-linked or monomer (edited version) or heterodimer of an alpha chain (AC D9U299 or AC D9U2A4) and this beta chain (non-edited version). In terms of tissue distribution, expressed by the venom gland.

The protein localises to the secreted. Functionally, the homodimer inhibits HMG-CoA reductase (HMGCR) (32% of inhibition produced by 0.6 uM), a glycoprotein involved in the control of cholesterol biosynthesis. The inhibitory effects of bumarsin are seen at much lower concentrations (0.6 uM) than that for statins such as atorvastatin (5 mM) and simvastatin (10 uM). In addition to inhibition of HMG-CoA reductase, this protein lowers cholesterol levels by inducing steroid hormone synthesis via StAR, and by increasing reverse cholesterol transport mediated by the induction of ABCA1 and APOA1. In terms of biological role, the heterodimer non-edited LVP1 induces lipolysis in rat adipocytes. Induction of lipolysis by LVP1 appears to be mediated through the beta-2 adrenergic receptor pathway (ADRB2). Its function is as follows. The monomer edited version, similar to alpha-toxins, may modulate voltage-gated sodium channels (Nav) and may block voltage-gated potassium channels (Kv). In Lychas mucronatus (Chinese swimming scorpion), this protein is Lipolysis-activating peptide 1-beta chain.